The chain runs to 67 residues: Beta-defensin 123 (67 aa).

The first 20 residues, 1–20, serve as a signal peptide directing secretion; it reads MKLLLLTLTVLLLLSQLTPG. Intrachain disulfides connect Cys-25/Cys-52, Cys-32/Cys-46, and Cys-36/Cys-53.

Belongs to the beta-defensin family.

The protein localises to the secreted. Has antibacterial activity. The polypeptide is Beta-defensin 123 (DEFB123) (Pongo pygmaeus (Bornean orangutan)).